A 171-amino-acid polypeptide reads, in one-letter code: Tubulin polymerization-promoting protein family member 2 (171 aa).

Positions 120 to 171 are disordered; that stretch reads LTDTSKYTGTHKERFDESGKGKGIAGREDVTDNSGYVSGYKGAGTYDKKGSN. Over residues 129 to 149 the composition is skewed to basic and acidic residues; that stretch reads THKERFDESGKGKGIAGREDV.

The protein belongs to the TPPP family.

Its subcellular location is the cytoplasm. The protein resides in the cytosol. The protein localises to the cell projection. It localises to the cilium. It is found in the flagellum. Its function is as follows. Probable regulator of microtubule dynamics required for sperm motility. In contrast to other members of the family, has no microtubule bundling activity. This is Tubulin polymerization-promoting protein family member 2 from Bos taurus (Bovine).